A 439-amino-acid polypeptide reads, in one-letter code: GTPase Der (439 aa).

2 consecutive EngA-type G domains span residues 4 to 168 (PIVA…KDDE) and 177 to 352 (INIA…DNYT). GTP is bound by residues 10–17 (GRPNVGKS), 57–61 (DTGGI), 120–123 (NKID), 183–190 (GKPNVGKS), 230–234 (DTAGL), and 295–298 (NKWD). The KH-like domain occupies 353–437 (KRVKTGVLND…GIKLEFRERK (85 aa)).

It belongs to the TRAFAC class TrmE-Era-EngA-EngB-Septin-like GTPase superfamily. EngA (Der) GTPase family. As to quaternary structure, associates with the 50S ribosomal subunit.

GTPase that plays an essential role in the late steps of ribosome biogenesis. The polypeptide is GTPase Der (Clostridium botulinum (strain Okra / Type B1)).